Reading from the N-terminus, the 152-residue chain is Large ribosomal subunit protein uL13 (152 aa).

The segment at 130–152 (HPHEAQSPEVLDLASKNPKNTRS) is disordered.

The protein belongs to the universal ribosomal protein uL13 family. In terms of assembly, part of the 50S ribosomal subunit.

Its function is as follows. This protein is one of the early assembly proteins of the 50S ribosomal subunit, although it is not seen to bind rRNA by itself. It is important during the early stages of 50S assembly. The sequence is that of Large ribosomal subunit protein uL13 from Dinoroseobacter shibae (strain DSM 16493 / NCIMB 14021 / DFL 12).